Here is a 247-residue protein sequence, read N- to C-terminus: Leucyl/phenylalanyl-tRNA--protein transferase (247 aa).

It belongs to the L/F-transferase family.

The protein localises to the cytoplasm. It carries out the reaction N-terminal L-lysyl-[protein] + L-leucyl-tRNA(Leu) = N-terminal L-leucyl-L-lysyl-[protein] + tRNA(Leu) + H(+). The enzyme catalyses N-terminal L-arginyl-[protein] + L-leucyl-tRNA(Leu) = N-terminal L-leucyl-L-arginyl-[protein] + tRNA(Leu) + H(+). It catalyses the reaction L-phenylalanyl-tRNA(Phe) + an N-terminal L-alpha-aminoacyl-[protein] = an N-terminal L-phenylalanyl-L-alpha-aminoacyl-[protein] + tRNA(Phe). Its function is as follows. Functions in the N-end rule pathway of protein degradation where it conjugates Leu, Phe and, less efficiently, Met from aminoacyl-tRNAs to the N-termini of proteins containing an N-terminal arginine or lysine. This is Leucyl/phenylalanyl-tRNA--protein transferase from Solidesulfovibrio magneticus (strain ATCC 700980 / DSM 13731 / RS-1) (Desulfovibrio magneticus).